Consider the following 197-residue polypeptide: MAREKIVVAGGTTKSWKLLLGLRIFAFMATLAAAIVMSLNKETKTLVVATIGTVPIKATLTAKFQHTPAFVFFVIANVMVSFHNLLMIVVQIFSRKLEYKGLRLLSIAILDMLNATLVSAAANAAVFVAELGKNGNKHAKWNKVCDRFTTYCDHGAGAIIAAFAGVILMLLVSAVSISRLLINSKNFSTTATTTSVV.

Ala-2 carries the post-translational modification N-acetylalanine. Over 2–17 (AREKIVVAGGTTKSWK) the chain is Cytoplasmic. A helical membrane pass occupies residues 18-38 (LLLGLRIFAFMATLAAAIVMS). Residues 39–69 (LNKETKTLVVATIGTVPIKATLTAKFQHTPA) lie on the Extracellular side of the membrane. Residues 70 to 90 (FVFFVIANVMVSFHNLLMIVV) form a helical membrane-spanning segment. Over 91–106 (QIFSRKLEYKGLRLLS) the chain is Cytoplasmic. A helical membrane pass occupies residues 107–127 (IAILDMLNATLVSAAANAAVF). Over 128–156 (VAELGKNGNKHAKWNKVCDRFTTYCDHGA) the chain is Extracellular. A helical membrane pass occupies residues 157–177 (GAIIAAFAGVILMLLVSAVSI). The Cytoplasmic portion of the chain corresponds to 178–197 (SRLLINSKNFSTTATTTSVV).

It belongs to the Casparian strip membrane proteins (CASP) family. As to quaternary structure, homodimer and heterodimers.

Its subcellular location is the cell membrane. This chain is CASP-like protein 1B2, found in Arabidopsis thaliana (Mouse-ear cress).